A 317-amino-acid polypeptide reads, in one-letter code: Glycine--tRNA ligase alpha subunit (317 aa).

The protein belongs to the class-II aminoacyl-tRNA synthetase family. In terms of assembly, tetramer of two alpha and two beta subunits.

Its subcellular location is the cytoplasm. It catalyses the reaction tRNA(Gly) + glycine + ATP = glycyl-tRNA(Gly) + AMP + diphosphate. In Leptothrix cholodnii (strain ATCC 51168 / LMG 8142 / SP-6) (Leptothrix discophora (strain SP-6)), this protein is Glycine--tRNA ligase alpha subunit.